A 223-amino-acid chain; its full sequence is Urease accessory protein UreF (223 aa).

This sequence belongs to the UreF family. In terms of assembly, ureD, UreF and UreG form a complex that acts as a GTP-hydrolysis-dependent molecular chaperone, activating the urease apoprotein by helping to assemble the nickel containing metallocenter of UreC. The UreE protein probably delivers the nickel.

It localises to the cytoplasm. In terms of biological role, required for maturation of urease via the functional incorporation of the urease nickel metallocenter. The sequence is that of Urease accessory protein UreF from Pseudomonas aeruginosa (strain LESB58).